The chain runs to 84 residues: Beta-cardiotoxin CTX23 (84 aa).

The signal sequence occupies residues 1-21 (MKTLLLTLVVVTIVCLDLGYT). 4 disulfide bridges follow: Cys-24-Cys-43, Cys-36-Cys-61, Cys-65-Cys-76, and Cys-77-Cys-82.

Belongs to the three-finger toxin family. Short-chain subfamily. Aminergic toxin sub-subfamily. In terms of tissue distribution, expressed by the venom gland.

It is found in the secreted. Acts as a beta-blocker by binding to beta-1 and beta-2 adrenergic receptors (ADRB1 and ADRB2). It dose-dependently decreases the heart rate (bradycardia), whereas conventional cardiotoxins increases it. At 100 mg/kg, intraperitoneal injection into mice provokes labored breathing, impaired locomotion, lack of response to external stimuli, and death (after 30 minutes). The polypeptide is Beta-cardiotoxin CTX23 (Ophiophagus hannah (King cobra)).